A 296-amino-acid chain; its full sequence is tRNA dimethylallyltransferase (296 aa).

Gly-19–Ser-26 provides a ligand contact to ATP. Thr-21–Ser-26 is a substrate binding site.

The protein belongs to the IPP transferase family. As to quaternary structure, monomer. Mg(2+) is required as a cofactor.

The catalysed reaction is adenosine(37) in tRNA + dimethylallyl diphosphate = N(6)-dimethylallyladenosine(37) in tRNA + diphosphate. Catalyzes the transfer of a dimethylallyl group onto the adenine at position 37 in tRNAs that read codons beginning with uridine, leading to the formation of N6-(dimethylallyl)adenosine (i(6)A). This chain is tRNA dimethylallyltransferase, found in Dinoroseobacter shibae (strain DSM 16493 / NCIMB 14021 / DFL 12).